Consider the following 466-residue polypeptide: RUS family member 1 (466 aa).

Ala2 bears the N-acetylalanine mark. The chain crosses the membrane as a helical span at residues 245 to 265; it reads LLMLPLVSDCLSLSLGCFILL.

This sequence belongs to the RUS1 family.

The protein resides in the membrane. This is RUS family member 1 (Rusf1) from Rattus norvegicus (Rat).